Consider the following 309-residue polypeptide: Taste receptor type 2 member 43 (309 aa).

Residue Met1 is a topological domain, extracellular. Residues 2-22 (ITFLPIIFSSLVVVTFVIGNF) form a helical membrane-spanning segment. At 23–46 (ANGFIALVNSIEWFKRQKISFADQ) the chain is on the cytoplasmic side. A helical membrane pass occupies residues 47 to 67 (ILTALAVSRVGLLWVLLLNWY). Topologically, residues 68 to 86 (LTVLNPAFNSVEVRTTAYN) are extracellular. Residues 87–107 (IWAVINHFSNWLATSLSIFYL) traverse the membrane as a helical segment. The Cytoplasmic segment spans residues 108 to 126 (LKIANFSNFIFLHLKRRVK). A helical membrane pass occupies residues 127-147 (SVILVMLLGPLLFLACHLFMI). The Extracellular segment spans residues 148–178 (NMNEIVRTKEFDGNMTWKIKLKSAMYFSNMT). Asn161 and Asn176 each carry an N-linked (GlcNAc...) asparagine glycan. The chain crosses the membrane as a helical span at residues 179-199 (VTMVANLVPFTLTLLSFLLLI). Residues 200 to 229 (CSLCKHLKKMQLHGKGSQDPSTKVHIKALQ) lie on the Cytoplasmic side of the membrane. A helical membrane pass occupies residues 230–250 (TVISFLLLCAIYFLSIMISVW). The Extracellular portion of the chain corresponds to 251–259 (SFGSLENKP). The helical transmembrane segment at 260–280 (VFMFCKAIRFSYPSIHPFILI) threads the bilayer. At 281–309 (WGNKKLKQTFLSVFWQMRYWVKGEKTSSP) the chain is on the cytoplasmic side.

The protein belongs to the G-protein coupled receptor T2R family.

It is found in the membrane. The protein localises to the cell projection. It localises to the cilium membrane. In terms of biological role, gustducin-coupled receptor immplicated in the perception of bitter compounds in the oral cavity and the gastrointestinal tract. Signals through PLCB2 and the calcium-regulated cation channel TRPM5. Activated by the sulfonyl amide sweeteners saccharin and acesulfame K. In airway epithelial cells, binding of bitter compounds increases the intracellular calcium ion concentration and stimulates ciliary beat frequency. May act as chemosensory receptors in airway epithelial cells to detect and eliminate potential noxious agents from the airways. In Pan paniscus (Pygmy chimpanzee), this protein is Taste receptor type 2 member 43 (TAS2R43).